A 317-amino-acid chain; its full sequence is Tetraspanin-15 (317 aa).

The tract at residues 1–43 (MADNAQVVPVEEPAATATATATATATTEPEAKSSDQMESQSDN) is disordered. Residues 1-60 (MADNAQVVPVEEPAATATATATATATTEPEAKSSDQMESQSDNKPPMGTLMALVNILAAG) lie on the Cytoplasmic side of the membrane. Over residues 7–28 (VVPVEEPAATATATATATATTE) the composition is skewed to low complexity. Residues 61–81 (VLPIFTFVLSLTLLGYAVWLL) traverse the membrane as a helical segment. At 82–96 (YMRSYDCEDILGLPR) the chain is on the extracellular side. Residues 97 to 117 (VQTLASVGLLAVFVVSNAALF) traverse the membrane as a helical segment. The Cytoplasmic segment spans residues 118–126 (LRRKFPMPA). The chain crosses the membrane as a helical span at residues 127–147 (LVVMVVVLLLMLFIGLAYAGV). Residues 148-287 (NEMQSRRFPA…IRSVRRKWWQ (140 aa)) lie on the Extracellular side of the membrane. N-linked (GlcNAc...) asparagine glycosylation is present at N224. Residues 288-308 (LGIFLIVISILLLMSHLLIFL) traverse the membrane as a helical segment. The Cytoplasmic segment spans residues 309-317 (ATFWERFKG).

The protein belongs to the tetraspanin (TM4SF) family.

It localises to the membrane. May be involved in the regulation of cell differentiation. The polypeptide is Tetraspanin-15 (TET15) (Arabidopsis thaliana (Mouse-ear cress)).